Consider the following 329-residue polypeptide: 4-hydroxythreonine-4-phosphate dehydrogenase (329 aa).

His136 and Thr137 together coordinate substrate. 3 residues coordinate a divalent metal cation: His166, His211, and His266. The substrate site is built by Lys274, Asn283, and Arg292.

This sequence belongs to the PdxA family. Homodimer. Requires Zn(2+) as cofactor. It depends on Mg(2+) as a cofactor. The cofactor is Co(2+).

The protein localises to the cytoplasm. The catalysed reaction is 4-(phosphooxy)-L-threonine + NAD(+) = 3-amino-2-oxopropyl phosphate + CO2 + NADH. It participates in cofactor biosynthesis; pyridoxine 5'-phosphate biosynthesis; pyridoxine 5'-phosphate from D-erythrose 4-phosphate: step 4/5. Functionally, catalyzes the NAD(P)-dependent oxidation of 4-(phosphooxy)-L-threonine (HTP) into 2-amino-3-oxo-4-(phosphooxy)butyric acid which spontaneously decarboxylates to form 3-amino-2-oxopropyl phosphate (AHAP). This is 4-hydroxythreonine-4-phosphate dehydrogenase from Escherichia coli O17:K52:H18 (strain UMN026 / ExPEC).